The following is a 297-amino-acid chain: Nucleotide-binding protein Bphy_0322 (297 aa).

8-15 (GISGSGKS) lines the ATP pocket. GTP is bound at residue 57–60 (DARS).

It belongs to the RapZ-like family.

Its function is as follows. Displays ATPase and GTPase activities. This chain is Nucleotide-binding protein Bphy_0322, found in Paraburkholderia phymatum (strain DSM 17167 / CIP 108236 / LMG 21445 / STM815) (Burkholderia phymatum).